The chain runs to 152 residues: Xanthine-guanine phosphoribosyltransferase (152 aa).

5-phospho-alpha-D-ribose 1-diphosphate is bound by residues 37–38 (RG), arginine 69, and 88–96 (DDLVDTGGT). Arginine 69 contributes to the GMP binding site. A Mg(2+)-binding site is contributed by aspartate 89. Residues aspartate 92 and isoleucine 135 each coordinate guanine. Residues aspartate 92 and isoleucine 135 each contribute to the xanthine site. GMP contacts are provided by residues 92-96 (DTGGT) and 134-135 (WI).

Belongs to the purine/pyrimidine phosphoribosyltransferase family. XGPT subfamily. Homotetramer. Requires Mg(2+) as cofactor.

It localises to the cell inner membrane. It carries out the reaction GMP + diphosphate = guanine + 5-phospho-alpha-D-ribose 1-diphosphate. It catalyses the reaction XMP + diphosphate = xanthine + 5-phospho-alpha-D-ribose 1-diphosphate. The catalysed reaction is IMP + diphosphate = hypoxanthine + 5-phospho-alpha-D-ribose 1-diphosphate. It participates in purine metabolism; GMP biosynthesis via salvage pathway; GMP from guanine: step 1/1. Its pathway is purine metabolism; XMP biosynthesis via salvage pathway; XMP from xanthine: step 1/1. Purine salvage pathway enzyme that catalyzes the transfer of the ribosyl-5-phosphate group from 5-phospho-alpha-D-ribose 1-diphosphate (PRPP) to the N9 position of the 6-oxopurines guanine and xanthine to form the corresponding ribonucleotides GMP (guanosine 5'-monophosphate) and XMP (xanthosine 5'-monophosphate), with the release of PPi. To a lesser extent, also acts on hypoxanthine. This Erwinia tasmaniensis (strain DSM 17950 / CFBP 7177 / CIP 109463 / NCPPB 4357 / Et1/99) protein is Xanthine-guanine phosphoribosyltransferase.